The following is a 246-amino-acid chain: Pyridoxine 5'-phosphate synthase (246 aa).

3-amino-2-oxopropyl phosphate contacts are provided by Asn8 and Arg19. Catalysis depends on His44, which acts as the Proton acceptor. 1-deoxy-D-xylulose 5-phosphate is bound by residues Arg46 and His51. Glu76 serves as the catalytic Proton acceptor. Position 106 (Thr106) interacts with 1-deoxy-D-xylulose 5-phosphate. His198 (proton donor) is an active-site residue. 3-amino-2-oxopropyl phosphate-binding positions include Asp199 and 221–222 (GH).

Belongs to the PNP synthase family. In terms of assembly, homooctamer; tetramer of dimers.

The protein localises to the cytoplasm. It carries out the reaction 3-amino-2-oxopropyl phosphate + 1-deoxy-D-xylulose 5-phosphate = pyridoxine 5'-phosphate + phosphate + 2 H2O + H(+). It participates in cofactor biosynthesis; pyridoxine 5'-phosphate biosynthesis; pyridoxine 5'-phosphate from D-erythrose 4-phosphate: step 5/5. Functionally, catalyzes the complicated ring closure reaction between the two acyclic compounds 1-deoxy-D-xylulose-5-phosphate (DXP) and 3-amino-2-oxopropyl phosphate (1-amino-acetone-3-phosphate or AAP) to form pyridoxine 5'-phosphate (PNP) and inorganic phosphate. This is Pyridoxine 5'-phosphate synthase from Brucella abortus (strain S19).